The primary structure comprises 286 residues: MNDAVTLRSGCKVNLDLHITSRRDDGYHEIDSLFLPLEEPHDELVVTVGDAPGITVTCAIQGIDPTRNTVTRAYDAYAEASGFRPPLRVELRKGVPHGAGLGGGSANAAAILNHLESIAPHPLGRETLCRLAARIGADVPFFIHAVPCRASGIGEIITPVAWPYKGFTLLLACPQVQVSTAWAYGALDAAEEKQLRVRGCLTTGGVADRNSFSRESWLHNSFEPVVFASHPELRSLKEALLRHGAAAALMSGSGASVFALFRRREDAEAAFEQLKGHGIRVYQHLL.

K12 is a catalytic residue. An ATP-binding site is contributed by 96–106 (PHGAGLGGGSA). D138 is an active-site residue.

It belongs to the GHMP kinase family. IspE subfamily.

It catalyses the reaction 4-CDP-2-C-methyl-D-erythritol + ATP = 4-CDP-2-C-methyl-D-erythritol 2-phosphate + ADP + H(+). Its pathway is isoprenoid biosynthesis; isopentenyl diphosphate biosynthesis via DXP pathway; isopentenyl diphosphate from 1-deoxy-D-xylulose 5-phosphate: step 3/6. In terms of biological role, catalyzes the phosphorylation of the position 2 hydroxy group of 4-diphosphocytidyl-2C-methyl-D-erythritol. The chain is 4-diphosphocytidyl-2-C-methyl-D-erythritol kinase from Nitratidesulfovibrio vulgaris (strain ATCC 29579 / DSM 644 / CCUG 34227 / NCIMB 8303 / VKM B-1760 / Hildenborough) (Desulfovibrio vulgaris).